A 602-amino-acid chain; its full sequence is Glutaminase liver isoform, mitochondrial (602 aa).

The transit peptide at 1-14 (MRSMRALQNALSRA) directs the protein to the mitochondrion. Disordered stretches follow at residues 1-29 (MRSM…PSRG) and 45-66 (AQGR…ASHS). Residue serine 219 participates in substrate binding. An N6-succinyllysine modification is found at lysine 253. Asparagine 268 lines the substrate pocket. 2 positions are modified to N6-acetyllysine: lysine 279 and lysine 284. Residues glutamate 314 and asparagine 321 each contribute to the substrate site. Lysine 329 carries the N6-acetyllysine modification. Substrate contacts are provided by tyrosine 347, tyrosine 399, and valine 417. ANK repeat units lie at residues 518–551 (DSRT…VKDR) and 552–585 (WGNI…SETQ).

Belongs to the glutaminase family. As to quaternary structure, homotetramer, dimer of dimers. Does not assemble into higher oligomers. Interacts with the PDZ domain of the syntrophin SNTA1. Interacts with the PDZ domain of TAX1BP3.

It localises to the mitochondrion. The catalysed reaction is L-glutamine + H2O = L-glutamate + NH4(+). With respect to regulation, enzyme activity is not stimulated by phosphate. Phosphate increases kcat, but decreases substrate affinity, resulting in unchanged enzyme activity. Functionally, plays an important role in the regulation of glutamine catabolism. Promotes mitochondrial respiration and increases ATP generation in cells by catalyzing the synthesis of glutamate and alpha-ketoglutarate. Increases cellular anti-oxidant function via NADH and glutathione production. May play a role in preventing tumor proliferation. The protein is Glutaminase liver isoform, mitochondrial (Gls2) of Mus musculus (Mouse).